Reading from the N-terminus, the 418-residue chain is Gamma-glutamyl phosphate reductase (418 aa).

This sequence belongs to the gamma-glutamyl phosphate reductase family.

Its subcellular location is the cytoplasm. It catalyses the reaction L-glutamate 5-semialdehyde + phosphate + NADP(+) = L-glutamyl 5-phosphate + NADPH + H(+). Its pathway is amino-acid biosynthesis; L-proline biosynthesis; L-glutamate 5-semialdehyde from L-glutamate: step 2/2. Functionally, catalyzes the NADPH-dependent reduction of L-glutamate 5-phosphate into L-glutamate 5-semialdehyde and phosphate. The product spontaneously undergoes cyclization to form 1-pyrroline-5-carboxylate. The polypeptide is Gamma-glutamyl phosphate reductase (Pelobacter propionicus (strain DSM 2379 / NBRC 103807 / OttBd1)).